Reading from the N-terminus, the 197-residue chain is Ribonuclease HII (197 aa).

In terms of domain architecture, RNase H type-2 spans 9–197 (KLIAGVDEVG…APVKKALEQF (189 aa)). 3 residues coordinate a divalent metal cation: Asp-15, Glu-16, and Asp-107.

Belongs to the RNase HII family. Requires Mn(2+) as cofactor. Mg(2+) serves as cofactor.

It localises to the cytoplasm. It carries out the reaction Endonucleolytic cleavage to 5'-phosphomonoester.. Functionally, endonuclease that specifically degrades the RNA of RNA-DNA hybrids. The sequence is that of Ribonuclease HII from Haemophilus influenzae (strain PittEE).